A 207-amino-acid chain; its full sequence is Interferon kappa (207 aa).

The first 27 residues, 1-27, serve as a signal peptide directing secretion; it reads MSTKPDMIQKCLWLEILMGIFIAGTLS. 2 cysteine pairs are disulfide-bonded: Cys-30–Cys-128 and Cys-59–Cys-181. Residues 118-148 adopt a coiled-coil conformation; the sequence is LDQQAEYLNQCLEEDKNENEDMKEMKENEMK.

It belongs to the alpha/beta interferon family. Expressed in keratinocytes, monocytes and in resting dendritic cells.

Its subcellular location is the secreted. In terms of biological role, may play a role in the regulation of immune cell function. Cytokine that imparts cellular protection against viral infection in a species-specific manner. Activates the interferon-stimulated response element signaling pathway. It is able to directly modulate cytokine release from monocytes and dendritic cells. Binds heparin. The polypeptide is Interferon kappa (IFNK) (Homo sapiens (Human)).